Consider the following 194-residue polypeptide: Imidazoleglycerol-phosphate dehydratase (194 aa).

The protein belongs to the imidazoleglycerol-phosphate dehydratase family.

It localises to the cytoplasm. The enzyme catalyses D-erythro-1-(imidazol-4-yl)glycerol 3-phosphate = 3-(imidazol-4-yl)-2-oxopropyl phosphate + H2O. It participates in amino-acid biosynthesis; L-histidine biosynthesis; L-histidine from 5-phospho-alpha-D-ribose 1-diphosphate: step 6/9. This is Imidazoleglycerol-phosphate dehydratase from Rubrobacter xylanophilus (strain DSM 9941 / JCM 11954 / NBRC 16129 / PRD-1).